The primary structure comprises 66 residues: Putative antitoxin APE_0279a.1 (66 aa).

Belongs to the UPF0165 family.

Functionally, possibly the antitoxin component of a type II toxin-antitoxin (TA) system. The polypeptide is Putative antitoxin APE_0279a.1 (Aeropyrum pernix (strain ATCC 700893 / DSM 11879 / JCM 9820 / NBRC 100138 / K1)).